The sequence spans 438 residues: Exosome complex component RRP45B (438 aa).

Disordered stretches follow at residues Pro293 to Glu322 and Ser334 to Ser438. 2 stretches are compositionally biased toward basic and acidic residues: residues Val307–Glu322 and Ser334–Ala347. The segment covering Thr380 to Ala394 has biased composition (polar residues). Positions Leu410–Lys429 are enriched in basic and acidic residues.

This sequence belongs to the RNase PH family.

It localises to the cytoplasm. The protein localises to the nucleus. Probable 3'-&gt;5' exoribonuclease involved in the regulation of cuticular wax biosynthesis by controlling the expression of CER3. May act by degrading a specific mRNA species encoding a negative regulator of CER3 transcription. Can perform exosomal functions and complement the yeast rrp45 null mutant. The chain is Exosome complex component RRP45B from Arabidopsis thaliana (Mouse-ear cress).